The following is a 554-amino-acid chain: (E)-beta-caryophyllene synthase (554 aa).

Mn(2+)-binding residues include Asp313 and Asp317. Residues 313–317 (DDIYD) carry the DDXXD motif motif. Homodimerization stretches follow at residues 319 to 325 (YGTLDEL) and 391 to 427 (EAQWFFSKYKPTMQEYMKVALLSSGYMMMTINSLAVI). The Mn(2+) site is built by Asp457 and Glu465.

The protein belongs to the terpene synthase family. As to quaternary structure, homodimer. Mn(2+) serves as cofactor. Requires Mg(2+) as cofactor. As to expression, expressed in peltate glandular trichomes. Present at low levels in flowers, leaves and stems.

It carries out the reaction (2E,6E)-farnesyl diphosphate = (-)-(E)-beta-caryophyllene + diphosphate. The catalysed reaction is (2E,6E)-farnesyl diphosphate = alpha-humulene + diphosphate. Its pathway is secondary metabolite biosynthesis; terpenoid biosynthesis. Involved in the biosynthesis of phenolic sesquiterpenes natural products. Sesquiterpene synthase converting (2E,6E)-farnesyl diphosphate (FPP) to (E)-beta-caryophyllene and alpha-humulene. This Origanum vulgare (Wild marjoram) protein is (E)-beta-caryophyllene synthase.